A 377-amino-acid chain; its full sequence is Presenilin-associated rhomboid-like protein, mitochondrial (377 aa).

The transit peptide at Met1–Gly50 directs the protein to the mitochondrion. Residues Phe51 to Pro99 lie on the Mitochondrial matrix side of the membrane. Residues Ser63 and Ser68 each carry the phosphoserine modification. Residues Phe100–Tyr119 traverse the membrane as a helical segment. At Glu120 to Arg165 the chain is on the mitochondrial intermembrane side. The chain crosses the membrane as a helical span at residues Thr166–Ser185. The Mitochondrial matrix segment spans residues Leu186–Ser205. Residues Pro206–Trp228 traverse the membrane as a helical segment. Residues Ser229–Gln242 lie on the Mitochondrial intermembrane side of the membrane. A helical transmembrane segment spans residues Phe243–Val260. The Mitochondrial matrix portion of the chain corresponds to Cys261–Pro270. The helical transmembrane segment at Ser271–Thr287 threads the bilayer. Ser275 functions as the Nucleophile in the catalytic mechanism. Residues Lys288–Arg293 are Mitochondrial intermembrane-facing. A helical membrane pass occupies residues Leu294–Met316. Residues Asp317 to His330 lie on the Mitochondrial matrix side of the membrane. A helical transmembrane segment spans residues Ala331–Trp352. The active site involves His333. The Mitochondrial intermembrane segment spans residues Lys353–Lys377.

The protein belongs to the peptidase S54 family. As to quaternary structure, interacts with PSEN1 and PSEN2. Binds OPA1. In terms of processing, P-beta is proteolytically processed (beta-cleavage) in a PARL-dependent manner.

It is found in the mitochondrion inner membrane. The protein resides in the nucleus. It carries out the reaction Cleaves type-1 transmembrane domains using a catalytic dyad composed of serine and histidine that are contributed by different transmembrane domains.. Its function is as follows. Required for the control of apoptosis during postnatal growth. Essential for proteolytic processing of an antiapoptotic form of OPA1 which prevents the release of mitochondrial cytochrome c in response to intrinsic apoptotic signals. Required for the maturation of PINK1 into its 52kDa mature form after its cleavage by mitochondrial-processing peptidase (MPP). Promotes cleavage of serine/threonine-protein phosphatase PGAM5 in damaged mitochondria in response to loss of mitochondrial membrane potential. Mediates differential cleavage of PINK1 and PGAM5 depending on the health status of mitochondria, disassociating from PINK1 and associating with PGAM5 in response to mitochondrial membrane potential loss. Required for processing of CLPB into a form with higher protein disaggregase activity by removing an autoinhibitory N-terminal peptide. Promotes processing of DIABLO/SMAC in the mitochondrion which is required for DIABLO apoptotic activity. Also required for cleavage of STARD7 and TTC19. Promotes changes in mitochondria morphology regulated by phosphorylation of P-beta domain. This Mus musculus (Mouse) protein is Presenilin-associated rhomboid-like protein, mitochondrial (Parl).